The sequence spans 379 residues: Proton extrusion protein PxcA (379 aa).

The next 4 membrane-spanning stretches (helical) occupy residues 153-173 (TLVSLRILLLMILVPLLLQQI), 254-274 (AIKNVLADVVATIGFVLVCLF), 300-320 (FVIILFTDIFVGFHSPEGWTV), and 337-357 (FIDLFIATFPVILATIFKYWI).

The protein belongs to the CemA family.

Its subcellular location is the cell inner membrane. In terms of biological role, required for H(+) efflux immediately after light irradiation to form a rapid H(+) concentration gradient across the thylakoid membranes. Together with PxcL, contributes to transient H(+) uptake following dark to light transition. In Synechococcus sp. (strain RCC307), this protein is Proton extrusion protein PxcA.